A 213-amino-acid chain; its full sequence is Uridine kinase (213 aa).

15 to 22 (GASASGKS) is a binding site for ATP.

The protein belongs to the uridine kinase family.

The protein localises to the cytoplasm. The enzyme catalyses uridine + ATP = UMP + ADP + H(+). It catalyses the reaction cytidine + ATP = CMP + ADP + H(+). It participates in pyrimidine metabolism; CTP biosynthesis via salvage pathway; CTP from cytidine: step 1/3. It functions in the pathway pyrimidine metabolism; UMP biosynthesis via salvage pathway; UMP from uridine: step 1/1. The chain is Uridine kinase from Yersinia enterocolitica serotype O:8 / biotype 1B (strain NCTC 13174 / 8081).